Reading from the N-terminus, the 118-residue chain is Large ribosomal subunit protein bL19 (118 aa).

It belongs to the bacterial ribosomal protein bL19 family.

This protein is located at the 30S-50S ribosomal subunit interface and may play a role in the structure and function of the aminoacyl-tRNA binding site. The sequence is that of Large ribosomal subunit protein bL19 from Marinobacter nauticus (strain ATCC 700491 / DSM 11845 / VT8) (Marinobacter aquaeolei).